A 461-amino-acid chain; its full sequence is Carbamoyl phosphate synthase arginine-specific small chain (461 aa).

The region spanning 240–427 is the Glutamine amidotransferase type-1 domain; the sequence is HVALIDCGVK…LENVQMYKDN (188 aa). C316 serves as the catalytic Nucleophile. Residues H400 and E402 contribute to the active site.

It belongs to the CarA family. As to quaternary structure, heterodimer composed of 2 chains; the small (or glutamine) chain promotes the hydrolysis of glutamine to ammonia, which is used by the large (or ammonia) chain to synthesize carbamoyl phosphate.

The protein resides in the cytoplasm. It catalyses the reaction hydrogencarbonate + L-glutamine + 2 ATP + H2O = carbamoyl phosphate + L-glutamate + 2 ADP + phosphate + 2 H(+). The catalysed reaction is L-glutamine + H2O = L-glutamate + NH4(+). It functions in the pathway amino-acid biosynthesis; L-arginine biosynthesis; carbamoyl phosphate from bicarbonate: step 1/1. Small subunit of the arginine-specific carbamoyl phosphate synthase (CPSase). CPSase catalyzes the formation of carbamoyl phosphate from the ammonia moiety of glutamine, carbonate, and phosphate donated by ATP, constituting the first step of 2 biosynthetic pathways, one leading to arginine and/or urea and the other to pyrimidine nucleotides. The small subunit (glutamine amidotransferase) binds and cleaves glutamine to supply the large subunit with the substrate ammonia. In Chaetomium globosum (strain ATCC 6205 / CBS 148.51 / DSM 1962 / NBRC 6347 / NRRL 1970) (Soil fungus), this protein is Carbamoyl phosphate synthase arginine-specific small chain (CPA1).